We begin with the raw amino-acid sequence, 70 residues long: Large ribosomal subunit protein uL29 (70 aa).

It belongs to the universal ribosomal protein uL29 family.

This is Large ribosomal subunit protein uL29 from Prochlorococcus marinus (strain NATL1A).